The following is a 201-amino-acid chain: Achaete-scute complex protein T5 (201 aa).

Polar residues predominate over residues M1–V10. Residues M1–R32 are disordered. The bHLH domain maps to P24–L90.

In terms of assembly, efficient DNA binding requires dimerization with another bHLH protein. As to expression, l(1)SC, SC and AC strongly label the presumptive stomatogastric nervous system, while ASE is more prominent in the presumptive procephalic lobe.

Functionally, AS-C proteins are involved in the determination of the neuronal precursors in the peripheral nervous system and the central nervous system. This is Achaete-scute complex protein T5 (ac) from Drosophila melanogaster (Fruit fly).